The sequence spans 457 residues: Siroheme synthase (457 aa).

The segment at 1-204 (MDHLPIFCQL…NDQKAITETT (204 aa)) is precorrin-2 dehydrogenase /sirohydrochlorin ferrochelatase. NAD(+) contacts are provided by residues 22–23 (DV) and 43–44 (LA). Position 128 is a phosphoserine (S128). The uroporphyrinogen-III C-methyltransferase stretch occupies residues 216–457 (GEVVLVGAGP…RDKLNWFSNH (242 aa)). P225 lines the S-adenosyl-L-methionine pocket. D248 acts as the Proton acceptor in catalysis. Catalysis depends on K270, which acts as the Proton donor. S-adenosyl-L-methionine-binding positions include 301 to 303 (GGD), I306, 331 to 332 (TA), M382, and G411.

In the N-terminal section; belongs to the precorrin-2 dehydrogenase / sirohydrochlorin ferrochelatase family. It in the C-terminal section; belongs to the precorrin methyltransferase family.

It catalyses the reaction uroporphyrinogen III + 2 S-adenosyl-L-methionine = precorrin-2 + 2 S-adenosyl-L-homocysteine + H(+). It carries out the reaction precorrin-2 + NAD(+) = sirohydrochlorin + NADH + 2 H(+). The catalysed reaction is siroheme + 2 H(+) = sirohydrochlorin + Fe(2+). It functions in the pathway cofactor biosynthesis; adenosylcobalamin biosynthesis; precorrin-2 from uroporphyrinogen III: step 1/1. Its pathway is cofactor biosynthesis; adenosylcobalamin biosynthesis; sirohydrochlorin from precorrin-2: step 1/1. The protein operates within porphyrin-containing compound metabolism; siroheme biosynthesis; precorrin-2 from uroporphyrinogen III: step 1/1. It participates in porphyrin-containing compound metabolism; siroheme biosynthesis; siroheme from sirohydrochlorin: step 1/1. It functions in the pathway porphyrin-containing compound metabolism; siroheme biosynthesis; sirohydrochlorin from precorrin-2: step 1/1. Its function is as follows. Multifunctional enzyme that catalyzes the SAM-dependent methylations of uroporphyrinogen III at position C-2 and C-7 to form precorrin-2 via precorrin-1. Then it catalyzes the NAD-dependent ring dehydrogenation of precorrin-2 to yield sirohydrochlorin. Finally, it catalyzes the ferrochelation of sirohydrochlorin to yield siroheme. In Escherichia coli O157:H7 (strain EC4115 / EHEC), this protein is Siroheme synthase.